The chain runs to 103 residues: Probable protease inhibitor Egf0.4a (103 aa).

Positions 1–22 are cleaved as a signal peptide; the sequence is MMSEKFALVLLVACIAFIGIET. The region spanning 35–87 is the TIL domain; sequence CGENEAYDSMRRGCEKRCDDHNPTFCFKFTTVCWCEKGYVRDKSDTCIKVEDC.

Belongs to the polydnaviridae EGF-like motif protein family.

The chain is Probable protease inhibitor Egf0.4a (O4) from Microplitis demolitor (Parasitoid wasp).